The primary structure comprises 232 residues: LexA repressor (232 aa).

The interval 1 to 25 (MSDDSSDSTSGAGSGRGRDSGLTER) is disordered. Basic and acidic residues predominate over residues 16-25 (RGRDSGLTER). Positions 46 to 66 (IREIGDAVGLTSTSSVAHQLR) form a DNA-binding region, H-T-H motif. Catalysis depends on for autocatalytic cleavage activity residues serine 156 and lysine 193.

This sequence belongs to the peptidase S24 family. Homodimer.

It catalyses the reaction Hydrolysis of Ala-|-Gly bond in repressor LexA.. In terms of biological role, represses a number of genes involved in the response to DNA damage (SOS response), including recA and lexA. In the presence of single-stranded DNA, RecA interacts with LexA causing an autocatalytic cleavage which disrupts the DNA-binding part of LexA, leading to derepression of the SOS regulon and eventually DNA repair. The polypeptide is LexA repressor (Mycolicibacterium vanbaalenii (strain DSM 7251 / JCM 13017 / BCRC 16820 / KCTC 9966 / NRRL B-24157 / PYR-1) (Mycobacterium vanbaalenii)).